The chain runs to 132 residues: UPF0102 protein LI0223 (132 aa).

Belongs to the UPF0102 family.

The protein is UPF0102 protein LI0223 of Lawsonia intracellularis (strain PHE/MN1-00).